Reading from the N-terminus, the 208-residue chain is Thymidylate kinase (208 aa).

Residue 10-17 participates in ATP binding; the sequence is GIDGCGKT.

It belongs to the thymidylate kinase family.

It carries out the reaction dTMP + ATP = dTDP + ADP. Phosphorylation of dTMP to form dTDP in both de novo and salvage pathways of dTTP synthesis. This Caldanaerobacter subterraneus subsp. tengcongensis (strain DSM 15242 / JCM 11007 / NBRC 100824 / MB4) (Thermoanaerobacter tengcongensis) protein is Thymidylate kinase.